The chain runs to 475 residues: 3-isopropylmalate dehydratase large subunit (475 aa).

Cysteine 352, cysteine 412, and cysteine 415 together coordinate [4Fe-4S] cluster.

The protein belongs to the aconitase/IPM isomerase family. LeuC type 1 subfamily. Heterodimer of LeuC and LeuD. It depends on [4Fe-4S] cluster as a cofactor.

The enzyme catalyses (2R,3S)-3-isopropylmalate = (2S)-2-isopropylmalate. It participates in amino-acid biosynthesis; L-leucine biosynthesis; L-leucine from 3-methyl-2-oxobutanoate: step 2/4. Catalyzes the isomerization between 2-isopropylmalate and 3-isopropylmalate, via the formation of 2-isopropylmaleate. The polypeptide is 3-isopropylmalate dehydratase large subunit (Gluconobacter oxydans (strain 621H) (Gluconobacter suboxydans)).